A 299-amino-acid chain; its full sequence is Arginase (299 aa).

Mn(2+)-binding residues include histidine 99, aspartate 122, histidine 124, and aspartate 126. Substrate is bound by residues 124-128 (HGDVN), 135-137 (SGN), and aspartate 178. Aspartate 226 and aspartate 228 together coordinate Mn(2+). Substrate contacts are provided by threonine 240 and glutamate 271.

The protein belongs to the arginase family. In terms of assembly, homohexamer. Mn(2+) serves as cofactor.

The catalysed reaction is L-arginine + H2O = urea + L-ornithine. Its pathway is nitrogen metabolism; urea cycle; L-ornithine and urea from L-arginine: step 1/1. Controls arginine catabolism. In Bacillus caldovelox, this protein is Arginase (rocF).